The primary structure comprises 313 residues: Ribosomal RNA small subunit methyltransferase H (313 aa).

Residues 35-37 (GGH), aspartate 55, phenylalanine 80, aspartate 102, and glutamine 109 each bind S-adenosyl-L-methionine.

Belongs to the methyltransferase superfamily. RsmH family.

The protein localises to the cytoplasm. It carries out the reaction cytidine(1402) in 16S rRNA + S-adenosyl-L-methionine = N(4)-methylcytidine(1402) in 16S rRNA + S-adenosyl-L-homocysteine + H(+). Functionally, specifically methylates the N4 position of cytidine in position 1402 (C1402) of 16S rRNA. The polypeptide is Ribosomal RNA small subunit methyltransferase H (Shewanella sp. (strain MR-7)).